Reading from the N-terminus, the 168-residue chain is Probable prefoldin subunit 5 (168 aa).

The protein belongs to the prefoldin subunit alpha family. In terms of assembly, heterohexamer of two PFD-alpha type and four PFD-beta type subunits.

Functionally, binds specifically to cytosolic chaperonin (c-CPN) and transfers target proteins to it. Binds to nascent polypeptide chain and promotes folding in an environment in which there are many competing pathways for nonnative proteins. The polypeptide is Probable prefoldin subunit 5 (Drosophila melanogaster (Fruit fly)).